Reading from the N-terminus, the 571-residue chain is Cyclic di-GMP phosphodiesterase TpdA (571 aa).

A run of 3 helical transmembrane segments spans residues 155 to 175 (IAWVLLVTTAIFFSVCYYAIN), 321 to 341 (VYYISGPLKSIILLSLFFLVI), and 395 to 415 (TLISNGLLLIHTILVIRAIYA). Positions 344–571 (HRSLQAFITY…HQGYFYPLHF (228 aa)) constitute an EAL domain.

It is found in the cell inner membrane. The enzyme catalyses 3',3'-c-di-GMP + H2O = 5'-phosphoguanylyl(3'-&gt;5')guanosine + H(+). Functionally, cyclic di-GMP phosphodiesterase that plays an important role in modulating the global c-di-GMP pool. Its ability to alter the c-di-GMP pool has an effect on swimming motility, swarming motility and biofilm formation, multicellular behaviors that are important for the survival and dissemination of this environmental pathogen. Exhibits a dual function, namely, c-di-GMP degradation and modulation of its own expression. The protein is Cyclic di-GMP phosphodiesterase TpdA of Vibrio parahaemolyticus serotype O3:K6 (strain RIMD 2210633).